The chain runs to 63 residues: uncharacterized protein (63 aa).

Residues I20–A40 form a helical membrane-spanning segment.

The protein resides in the membrane. This is an uncharacterized protein from Escherichia coli O157:H7.